The primary structure comprises 90 residues: MNKTDLINAVAEQADLTKKEAGSAVDAVFESIQNSLAKGEKVQLIGFGNFEVRERAARKGRNPQTGKEIDIPASKVPAFKAGKALKDAVK.

Belongs to the bacterial histone-like protein family. Homodimer.

Functionally, histone-like DNA-binding protein which is capable of wrapping DNA to stabilize it, and thus to prevent its denaturation under extreme environmental conditions. The polypeptide is DNA-binding protein HU (hup) (Staphylococcus aureus (strain COL)).